The following is a 190-amino-acid chain: Ribosome-recycling factor (190 aa).

The protein belongs to the RRF family.

It is found in the cytoplasm. Its function is as follows. Responsible for the release of ribosomes from messenger RNA at the termination of protein biosynthesis. May increase the efficiency of translation by recycling ribosomes from one round of translation to another. In Fusobacterium nucleatum subsp. nucleatum (strain ATCC 25586 / DSM 15643 / BCRC 10681 / CIP 101130 / JCM 8532 / KCTC 2640 / LMG 13131 / VPI 4355), this protein is Ribosome-recycling factor.